Consider the following 364-residue polypeptide: Coproporphyrin III ferrochelatase (364 aa).

Arginine 29 and tyrosine 118 together coordinate Fe-coproporphyrin III. Fe(2+) contacts are provided by histidine 169 and glutamate 250.

It belongs to the ferrochelatase family.

It localises to the cytoplasm. It catalyses the reaction Fe-coproporphyrin III + 2 H(+) = coproporphyrin III + Fe(2+). Its pathway is porphyrin-containing compound metabolism; protoheme biosynthesis. Its function is as follows. Involved in coproporphyrin-dependent heme b biosynthesis. Catalyzes the insertion of ferrous iron into coproporphyrin III to form Fe-coproporphyrin III. The chain is Coproporphyrin III ferrochelatase from Streptococcus pneumoniae (strain Taiwan19F-14).